Here is a 94-residue protein sequence, read N- to C-terminus: Sec-independent protein translocase protein TatA (94 aa).

Residues 1 to 21 (MFGRLGAPEIILILVVIILLF) form a helical membrane-spanning segment. The segment at 44–94 (AKAMKSEGQESTPAGPPNTDEQPPAQRTIQAAPGDVTSSRPVSEPTDTTKR) is disordered. Residues 62 to 72 (TDEQPPAQRTI) show a composition bias toward polar residues.

This sequence belongs to the TatA/E family. As to quaternary structure, the Tat system comprises two distinct complexes: a TatABC complex, containing multiple copies of TatA, TatB and TatC subunits, and a separate TatA complex, containing only TatA subunits. Substrates initially bind to the TatABC complex, which probably triggers association of the separate TatA complex to form the active translocon.

The protein resides in the cell membrane. Its function is as follows. Part of the twin-arginine translocation (Tat) system that transports large folded proteins containing a characteristic twin-arginine motif in their signal peptide across membranes. TatA could form the protein-conducting channel of the Tat system. This chain is Sec-independent protein translocase protein TatA, found in Streptomyces avermitilis (strain ATCC 31267 / DSM 46492 / JCM 5070 / NBRC 14893 / NCIMB 12804 / NRRL 8165 / MA-4680).